Here is a 303-residue protein sequence, read N- to C-terminus: Trans-aconitate 2-methyltransferase (303 aa).

The disordered stretch occupies residues 271 to 303 (EGSGGSGGSGGSAGSAGCAGSGGSVGPAGEAGR). Over residues 272-303 (GSGGSGGSGGSAGSAGCAGSGGSVGPAGEAGR) the composition is skewed to gly residues.

Belongs to the methyltransferase superfamily. Tam family.

The protein resides in the cytoplasm. The catalysed reaction is trans-aconitate + S-adenosyl-L-methionine = (E)-3-(methoxycarbonyl)pent-2-enedioate + S-adenosyl-L-homocysteine. Catalyzes the S-adenosylmethionine monomethyl esterification of trans-aconitate. The protein is Trans-aconitate 2-methyltransferase of Streptomyces coelicolor (strain ATCC BAA-471 / A3(2) / M145).